The sequence spans 265 residues: MADS-box protein JOINTLESS (265 aa).

The MADS-box domain maps to 3–57 (REKIQIKKIDNSTARQVTFSKRRRGLFKKAEELSVLCDADVALIIFSSTGKLFDY). Positions 87–177 (QLVENSNYSR…RQQVMEISNN (91 aa)) constitute a K-box domain. The segment at 196–232 (ENGFNNNNNEDGQSSESVTNPCNSIDPPPQDDDSSDT) is disordered. Residues 205–218 (EDGQSSESVTNPCN) show a composition bias toward polar residues.

Widely expressed with highest levels in shoot tips and axillary buds. Also found in fully developed pedicels and flowers.

It is found in the nucleus. Putative transcription factor that coordinates gene expression underlying the differentiation of the pedicel abscission zone. May also be involved in the maintenance of the inflorescence meristem state. This Solanum lycopersicum (Tomato) protein is MADS-box protein JOINTLESS (J).